The following is a 451-amino-acid chain: Tubulin alpha-1/alpha-2 chain (451 aa).

A GTP-binding site is contributed by glutamine 11. Lysine 40 carries the post-translational modification N6-acetyllysine. GTP-binding residues include glutamate 71, glycine 144, threonine 145, threonine 179, asparagine 206, and asparagine 228. Residue glutamate 71 participates in Mg(2+) binding. The active site involves glutamate 254.

This sequence belongs to the tubulin family. Dimer of alpha and beta chains. A typical microtubule is a hollow water-filled tube with an outer diameter of 25 nm and an inner diameter of 15 nM. Alpha-beta heterodimers associate head-to-tail to form protofilaments running lengthwise along the microtubule wall with the beta-tubulin subunit facing the microtubule plus end conferring a structural polarity. Microtubules usually have 13 protofilaments but different protofilament numbers can be found in some organisms and specialized cells. Requires Mg(2+) as cofactor. Post-translationally, undergoes a tyrosination/detyrosination cycle, the cyclic removal and re-addition of a C-terminal tyrosine residue by the enzymes tubulin tyrosine carboxypeptidase (TTCP) and tubulin tyrosine ligase (TTL), respectively. Acetylation of alpha chains at Lys-40 stabilizes microtubules and affects affinity and processivity of microtubule motors. This modification has a role in multiple cellular functions, ranging from cell motility, cell cycle progression or cell differentiation to intracellular trafficking and signaling.

The protein localises to the cytoplasm. It localises to the cytoskeleton. It carries out the reaction GTP + H2O = GDP + phosphate + H(+). Its function is as follows. Tubulin is the major constituent of microtubules, a cylinder consisting of laterally associated linear protofilaments composed of alpha- and beta-tubulin heterodimers. Microtubules grow by the addition of GTP-tubulin dimers to the microtubule end, where a stabilizing cap forms. Below the cap, tubulin dimers are in GDP-bound state, owing to GTPase activity of alpha-tubulin. In Volvox carteri (Green alga), this protein is Tubulin alpha-1/alpha-2 chain (TUBA1).